Here is a 197-residue protein sequence, read N- to C-terminus: Lactoylglutathione lyase-like protein terB (197 aa).

The N-terminal stretch at 1–19 is a signal peptide; that stretch reads MARFAVLQLLLPLAAGLTG. Residues Asn82, Asn99, and Asn140 are each glycosylated (N-linked (GlcNAc...) asparagine).

It belongs to the glyoxalase I family.

Functionally, lactoylglutathione lyase-like protein; part of the gene cluster that mediates the biosynthesis of terrein, a fungal metabolite with ecological, antimicrobial, antiproliferative, and antioxidative activities. The first step in the pathway is performed by the polyketide synthase terA that produces 4-hydroxy-6-methylpyranon (4-HMP), orsellinic acid (OA), and 2,3-dehydro-6-hydroxymellein (2,3-dehydro-6-HM) by condensing acetyl-CoA with two, three, or four malonyl-CoA units, respectively. 4-HMP and OA are not pathway intermediates, but are rather shunt or side products. 2,3-dehydro-6-HM is further converted to 6-hydroxymellein (6-HM) by the 6-hydroxymellein synthase terB. The monooxygenases terC and terD, the multicopper oxidase terE and the Kelch-like protein terF are then involved in the transformation of 6-HM to terrein. Even if they are co-regulated with the other terrein cluster genes, terH and terI seem to be dispensable for terrein production; whereas one or both of the 2 transporters terG and terJ are probably required for efficient secretion of metabolites. The sequence is that of Lactoylglutathione lyase-like protein terB from Aspergillus terreus (strain NIH 2624 / FGSC A1156).